The sequence spans 173 residues: Crossover junction endodeoxyribonuclease RuvC (173 aa).

Residues D8, E67, and D139 contribute to the active site. Mg(2+)-binding residues include D8, E67, and D139.

This sequence belongs to the RuvC family. Homodimer which binds Holliday junction (HJ) DNA. The HJ becomes 2-fold symmetrical on binding to RuvC with unstacked arms; it has a different conformation from HJ DNA in complex with RuvA. In the full resolvosome a probable DNA-RuvA(4)-RuvB(12)-RuvC(2) complex forms which resolves the HJ. Mg(2+) serves as cofactor.

The protein localises to the cytoplasm. It catalyses the reaction Endonucleolytic cleavage at a junction such as a reciprocal single-stranded crossover between two homologous DNA duplexes (Holliday junction).. Its function is as follows. The RuvA-RuvB-RuvC complex processes Holliday junction (HJ) DNA during genetic recombination and DNA repair. Endonuclease that resolves HJ intermediates. Cleaves cruciform DNA by making single-stranded nicks across the HJ at symmetrical positions within the homologous arms, yielding a 5'-phosphate and a 3'-hydroxyl group; requires a central core of homology in the junction. The consensus cleavage sequence is 5'-(A/T)TT(C/G)-3'. Cleavage occurs on the 3'-side of the TT dinucleotide at the point of strand exchange. HJ branch migration catalyzed by RuvA-RuvB allows RuvC to scan DNA until it finds its consensus sequence, where it cleaves and resolves the cruciform DNA. In Sodalis glossinidius (strain morsitans), this protein is Crossover junction endodeoxyribonuclease RuvC.